A 167-amino-acid polypeptide reads, in one-letter code: uncharacterized protein (167 aa).

It is found in the plastid. Its subcellular location is the chloroplast. This is an uncharacterized protein from Mesostigma viride (Green alga).